The chain runs to 459 residues: MIFYNSLSGQKEQFKPIEANKIKMYACGVTVYDDCHIGHARTYIAFDVINRYFKYRGYDVTLVRNITDIDDKIIKRANENGESTTELVERNIKAMHDVFARLNILKPSKEPRATETIPEMVAMIETLIKKGYAYQGANGDVFYRVTKFADYGKLSKQNLEALQQGSRVDVVEEKENPMDFVLWKMAKEGEPAWDSPWGAGRPGWHIECSAMSKKLLGDTFDIHAGGSDLRFPHHENEIAQSEACNECTFANYWLHSGMVKVNAEKMSKSLNNFFTIVEVLEEYHPEVVRYFLASTVYRSEINYSKENLENAKASVERLFNALRDIEPIEVNLPDDASEYEEKFIKAMDNDFNTPEALAVLFSLAKEINTLKTTNKYKASGYAYLLRKLCDVLGILFTDIEEYFKQGDGVDASEIEKLIAERTQAKKDKNYARADEIRNQLQQQGIILEDSATGTTWKKG.

Cys27 is a binding site for Zn(2+). Positions 29 to 39 (VTVYDDCHIGH) match the 'HIGH' region motif. Zn(2+) is bound by residues Cys208, His233, and Glu237. The 'KMSKS' region motif lies at 265 to 269 (KMSKS). Lys268 lines the ATP pocket.

Belongs to the class-I aminoacyl-tRNA synthetase family. Monomer. It depends on Zn(2+) as a cofactor.

It localises to the cytoplasm. It catalyses the reaction tRNA(Cys) + L-cysteine + ATP = L-cysteinyl-tRNA(Cys) + AMP + diphosphate. The sequence is that of Cysteine--tRNA ligase from Francisella tularensis subsp. novicida (strain U112).